Reading from the N-terminus, the 363-residue chain is Phospho-N-acetylmuramoyl-pentapeptide-transferase (363 aa).

A run of 9 helical transmembrane segments spans residues 13–33 (ISGI…AFFL), 49–69 (LPLL…IPLL), 95–115 (MGGI…SNFA), 119–139 (LAVS…DWQI), 154–174 (LALQ…NQPS), 183–203 (WVSF…FVLV), 224–244 (AIAL…LMVF), 281–301 (AVAL…IFFV), and 343–363 (ELQV…ICLA).

This sequence belongs to the glycosyltransferase 4 family. MraY subfamily. Mg(2+) is required as a cofactor.

The protein resides in the cell inner membrane. The catalysed reaction is UDP-N-acetyl-alpha-D-muramoyl-L-alanyl-gamma-D-glutamyl-meso-2,6-diaminopimeloyl-D-alanyl-D-alanine + di-trans,octa-cis-undecaprenyl phosphate = di-trans,octa-cis-undecaprenyl diphospho-N-acetyl-alpha-D-muramoyl-L-alanyl-D-glutamyl-meso-2,6-diaminopimeloyl-D-alanyl-D-alanine + UMP. Its pathway is cell wall biogenesis; peptidoglycan biosynthesis. In terms of biological role, catalyzes the initial step of the lipid cycle reactions in the biosynthesis of the cell wall peptidoglycan: transfers peptidoglycan precursor phospho-MurNAc-pentapeptide from UDP-MurNAc-pentapeptide onto the lipid carrier undecaprenyl phosphate, yielding undecaprenyl-pyrophosphoryl-MurNAc-pentapeptide, known as lipid I. This chain is Phospho-N-acetylmuramoyl-pentapeptide-transferase, found in Nostoc punctiforme (strain ATCC 29133 / PCC 73102).